Here is a 578-residue protein sequence, read N- to C-terminus: Sulfite reductase [NADPH] hemoprotein beta-component (578 aa).

Cysteine 441, cysteine 447, cysteine 487, and cysteine 491 together coordinate [4Fe-4S] cluster. Residue cysteine 491 coordinates siroheme.

The protein belongs to the nitrite and sulfite reductase 4Fe-4S domain family. In terms of assembly, alpha(8)-beta(8). The alpha component is a flavoprotein, the beta component is a hemoprotein. Siroheme is required as a cofactor. [4Fe-4S] cluster serves as cofactor.

The enzyme catalyses hydrogen sulfide + 3 NADP(+) + 3 H2O = sulfite + 3 NADPH + 4 H(+). It functions in the pathway sulfur metabolism; hydrogen sulfide biosynthesis; hydrogen sulfide from sulfite (NADPH route): step 1/1. Its function is as follows. Component of the sulfite reductase complex that catalyzes the 6-electron reduction of sulfite to sulfide. This is one of several activities required for the biosynthesis of L-cysteine from sulfate. This is Sulfite reductase [NADPH] hemoprotein beta-component from Vibrio parahaemolyticus serotype O3:K6 (strain RIMD 2210633).